The sequence spans 1088 residues: MGKYNLILSEYLSFIYNSQSAVQIPIYYSSNSELESRCVEFHSKCLENSKNGLSLKKLFIEYNDVIENATLLSILSYSYDKYNAVERKLVKYARGKPLEADLTVNELDYENNKITSELFPTAEEYTDSLMDPAILTSLSSNLNAVMFWLEKHENDTAEKLKIYKRRLDLFTIVASTVNKYGVPRHNAKYRYEYDVMKDKPYYLVTWANSSIEMLMSVFSHEDYLIARELIVLSYSNRSTLAKLVSSPMSILVALVDINGTFITNEELELEFSNKYVRAIVPDQTFDELKQMLDNMRKAGLVDIPKMIQDWLTDCSIEKFPLMAKIYSWSFHVGFRKQKMLDAALDQLKTEYTEDVDDEMYREYTMLIRDEVVKMLEESVKHDDHLLQDSELARLLSMSSASNGESRQLKFGRKTIFSTKKNMHVMDDMANGRYTPGIIPLVNVDKPIPLGRRDVPGRRTRIIFILPYEYFIAQHAVVEKMLIYAKHTREYAEFYSQSNQLLSYGDVTRFLSNNAMVLYTDVSQWDSSQHNTQPFRKGIIMGLDILANMTNDARVIQTLNLYKQTQINLMDSYVQIPDGNVIKKIQYGAVASGEKQTKAANSIANLALIKTVLSRISNKYSFATKIIRVDGDDNYAVLQFNTEVTKQMVQNVSNDVRETYARMNAKVKALVSTVGIEIAKRYIAGGKIFFRAGINLLNNEKRGQSTQWDQAAVLYSNYIVNRLRGFETDREFIMTKIMQMTSVAITGSLRLFPSERVLTTNSTFKVFDSEDFIIEYGTTDDEVYIQRAFMSLSSQRSGIADEIAASTTFKNYVSKLSEQLLFSKNNIVSRGIALTEKAKLNSYAPISLEKRRAQISALLAMLQKPVTFRSSKITINDILRDIKPFFTISEAHLPIQYQKFMPTLPENVQYIIQCIGSRTYQIEDDGSKSAISRLISKYSVYKPSIEELYKVISLHENEIQLYLISLGIPKIDADTYVGSKIYSQDKYRILESYVYNLLSINYGCYQLFDFNSPDLEKLIRIPFKGKIPAVTFILHLYAKLEIINYAIKNGSWISLFCNYPKSEMIKLWKKMWNITSLRSPYTNANFFQD.

Residues 501–687 enclose the RdRp catalytic domain; the sequence is LSYGDVTRFL…AKRYIAGGKI (187 aa).

Belongs to the reoviridae RNA-directed RNA polymerase family. As to quaternary structure, interacts with VP3 (Potential). Interacts with VP2; this interaction activates VP1. Interacts with NSP5; this interaction is probably necessary for the formation of functional virus factories. Interacts with NSP2; this interaction is weak. Requires Mg(2+) as cofactor.

The protein localises to the virion. It carries out the reaction RNA(n) + a ribonucleoside 5'-triphosphate = RNA(n+1) + diphosphate. In terms of biological role, RNA-directed RNA polymerase that is involved in both transcription and genome replication. Together with VP3 capping enzyme, forms an enzyme complex positioned near the channels situated at each of the five-fold vertices of the core. Following infection, the outermost layer of the virus is lost, leaving a double-layered particle (DLP) made up of the core and VP6 shell. VP1 then catalyzes the transcription of fully conservative plus-strand genomic RNAs that are extruded through the DLP's channels into the cytoplasm where they function as mRNAs for translation of viral proteins. One copy of each of the viral (+)RNAs is also recruited during core assembly, together with newly synthesized polymerase complexes and VP2. The polymerase of these novo-formed particles catalyzes the synthesis of complementary minus-strands leading to dsRNA formation. To do so, the polymerase specifically recognizes and binds 4 bases 5'-UGUG-3' in the conserved 3'-sequence of plus-strand RNA templates. VP2 presumably activates the autoinhibited VP1-RNA complex to coordinate packaging and genome replication. Once dsRNA synthesis is complete, the polymerase switches to the transcriptional mode, thus providing secondary transcription. This chain is RNA-directed RNA polymerase, found in Homo sapiens (Human).